A 189-amino-acid chain; its full sequence is Inner membrane-spanning protein YciB (189 aa).

The next 5 helical transmembrane spans lie at 4–24, 53–73, 76–96, 121–141, and 149–169; these read FFEFIPLIIFFVVFKTTDIYI, ITFGMVLVFGTLTIVLHDDVF, WKVTVVYALFSLALLVSQFFY, MAWALLFAVLSAVNVYVAFSL, and FKVFGLLAITLAFTLLSGLYI.

The protein belongs to the YciB family.

The protein resides in the cell inner membrane. In terms of biological role, plays a role in cell envelope biogenesis, maintenance of cell envelope integrity and membrane homeostasis. This chain is Inner membrane-spanning protein YciB, found in Psychromonas ingrahamii (strain DSM 17664 / CCUG 51855 / 37).